The following is a 400-amino-acid chain: Subtilisin-like protease 7 (400 aa).

Positions Met1–Gly20 are cleaved as a signal peptide. Positions Ala21–Asn119 are excised as a propeptide. The Inhibitor I9 domain occupies Lys36–Ile118. The 272-residue stretch at Ser129–Lys400 folds into the Peptidase S8 domain. Active-site charge relay system residues include Asp161 and His192. An N-linked (GlcNAc...) asparagine glycan is attached at Asn252. Ser346 functions as the Charge relay system in the catalytic mechanism. Residue Asn396 is glycosylated (N-linked (GlcNAc...) asparagine).

This sequence belongs to the peptidase S8 family.

Its subcellular location is the secreted. Functionally, secreted subtilisin-like serine protease with keratinolytic activity that contributes to pathogenicity. This is Subtilisin-like protease 7 (SUB7) from Arthroderma gypseum (strain ATCC MYA-4604 / CBS 118893) (Microsporum gypseum).